The following is a 536-amino-acid chain: T-complex protein 1 subunit delta (536 aa).

Residues 1 to 21 (MAAVAAPMASKPRGSKAESFV) are disordered.

This sequence belongs to the TCP-1 chaperonin family. As to quaternary structure, heterooligomeric complex of about 850 to 900 kDa that forms two stacked rings, 12 to 16 nm in diameter.

The protein localises to the cytoplasm. Its function is as follows. Molecular chaperone; assists the folding of proteins upon ATP hydrolysis. Known to play a role, in vitro, in the folding of actin and tubulin. In Arabidopsis thaliana (Mouse-ear cress), this protein is T-complex protein 1 subunit delta.